Reading from the N-terminus, the 51-residue chain is Lantibiotic flavucin (51 aa).

A propeptide spanning residues 1–20 is cleaved from the precursor; the sequence is MSDFTLDFAEGDAADTVSPQ. Residues 23–27 constitute a cross-link (lanthionine (Ser-Cys)); the sequence is SKSLC. 3 cross-links (beta-methyllanthionine (Thr-Cys)) span residues 28–31, 33–38, and 42–45; these read TPGC, TGWMMC, and TKGC.

It belongs to the type A lantibiotic family. Maturation of lantibiotics involves the enzymatic conversion of Thr, and Ser into dehydrated AA and the formation of thioether bonds with cysteine. This is followed by membrane translocation and cleavage of the modified precursor.

Antimicrobial activity depends on the dehydration degree and integrity of flavucin. Functionally, lanthionine-containing peptide antibiotic (lantibiotic) active on certain Gram-positive bacteria. The bactericidal activity of lantibiotics is based on depolarization of energized bacterial cytoplasmic membranes, initiated by the formation of aqueous transmembrane pores. Flavucin has high antimicrobial activity against several pathogenic bacteria such as S.aureus, E.faecalis, E.faecium and L.monocytogenes. Is also active against the Gram-negative P.aeruginosa. The protein is Lantibiotic flavucin of Corynebacterium lipophiloflavum (strain ATCC 700352 / DSM 44291 / CCUG 37336 / JCM 10383 / DMMZ 1944).